Here is a 98-residue protein sequence, read N- to C-terminus: MNHLQQRQLFLENLLVGVNNMFHQMQKRPVNTCCRSLQKILDHLILLQTIHSPAFRLDQMQLRQMQTLACLWIHQYNHDHQVTLGAIKWISPLIKELK.

The protein belongs to the rotavirus A NSP6 family. As to quaternary structure, interacts with NSP2 and NSP5.

It localises to the host cytoplasm. It is found in the host mitochondrion. This chain is Non-structural protein 6, found in Bos taurus (Bovine).